Here is an 807-residue protein sequence, read N- to C-terminus: Leucine--tRNA ligase (807 aa).

Residues 40-51 carry the 'HIGH' region motif; sequence PYPSGTGLHVGH. Positions 576–580 match the 'KMSKS' region motif; that stretch reads KMSKS. ATP is bound at residue lysine 579.

Belongs to the class-I aminoacyl-tRNA synthetase family.

Its subcellular location is the cytoplasm. It carries out the reaction tRNA(Leu) + L-leucine + ATP = L-leucyl-tRNA(Leu) + AMP + diphosphate. The polypeptide is Leucine--tRNA ligase (Pelodictyon phaeoclathratiforme (strain DSM 5477 / BU-1)).